Here is a 435-residue protein sequence, read N- to C-terminus: Cytidine monophosphate-N-acetylneuraminic acid hydroxylase (435 aa).

It belongs to the CMP-Neu5Ac hydroxylase family. The cofactor is [2Fe-2S] cluster.

The protein resides in the cytoplasm. The catalysed reaction is CMP-N-acetyl-beta-neuraminate + 2 Fe(II)-[cytochrome b5] + O2 + 2 H(+) = CMP-N-glycoloyl-beta-neuraminate + 2 Fe(III)-[cytochrome b5] + H2O. Its pathway is amino-sugar metabolism; N-acetylneuraminate metabolism. In terms of biological role, sialic acids are components of carbohydrate chains of glycoconjugates and are involved in cell-cell recognition and cell-pathogen interactions. Catalyzes the conversion of CMP-N-acetylneuraminic acid (CMP-Neu5Ac) into its hydroxylated derivative CMP-N-glycolylneuraminic acid (CMP-Neu5Gc), a sialic acid abundantly expressed at the surface of many cells. This chain is Cytidine monophosphate-N-acetylneuraminic acid hydroxylase, found in Sus scrofa (Pig).